Here is a 297-residue protein sequence, read N- to C-terminus: Transmembrane protein 178A (297 aa).

An N-terminal signal peptide occupies residues M1–A25. Topologically, residues I26 to G179 are extracellular. The segment covering E41 to N57 has biased composition (basic and acidic residues). The segment at E41–D86 is disordered. The span at R68–P79 shows a compositional bias: low complexity. N-linked (GlcNAc...) asparagine glycosylation occurs at N158. A helical membrane pass occupies residues F180–F200. Over W201–H208 the chain is Cytoplasmic. A helical membrane pass occupies residues V209–A229. Over A230 to S257 the chain is Extracellular. Residues I258–Y278 form a helical membrane-spanning segment. Residues P279–V297 lie on the Cytoplasmic side of the membrane.

It belongs to the TMEM178 family. Interacts with STIM1.

The protein resides in the endoplasmic reticulum membrane. In terms of biological role, acts as a negative regulator of osteoclast differentiation in basal and inflammatory conditions by regulating TNFSF11-induced Ca (2+) fluxes, thereby controlling the induction of NFATC1. The sequence is that of Transmembrane protein 178A (Tmem178a) from Rattus norvegicus (Rat).